A 405-amino-acid polypeptide reads, in one-letter code: Argininosuccinate synthase (405 aa).

ATP is bound by residues 10 to 18 (AYSGGLDTS) and Ala-37. Tyr-88 and Ser-93 together coordinate L-citrulline. Position 118 (Gly-118) interacts with ATP. The L-aspartate site is built by Thr-120, Asn-124, and Asp-125. Asn-124 is an L-citrulline binding site. Residues Arg-128, Ser-179, Ser-188, Glu-264, and Tyr-276 each coordinate L-citrulline.

Belongs to the argininosuccinate synthase family. Type 1 subfamily. In terms of assembly, homotetramer.

It localises to the cytoplasm. The catalysed reaction is L-citrulline + L-aspartate + ATP = 2-(N(omega)-L-arginino)succinate + AMP + diphosphate + H(+). It functions in the pathway amino-acid biosynthesis; L-arginine biosynthesis; L-arginine from L-ornithine and carbamoyl phosphate: step 2/3. The chain is Argininosuccinate synthase from Nitrosococcus oceani (strain ATCC 19707 / BCRC 17464 / JCM 30415 / NCIMB 11848 / C-107).